The primary structure comprises 855 residues: DNA mismatch repair protein MutS (855 aa).

Residue 617 to 624 (GPNMGGKS) coordinates ATP.

It belongs to the DNA mismatch repair MutS family.

In terms of biological role, this protein is involved in the repair of mismatches in DNA. It is possible that it carries out the mismatch recognition step. This protein has a weak ATPase activity. This Baumannia cicadellinicola subsp. Homalodisca coagulata protein is DNA mismatch repair protein MutS.